Consider the following 116-residue polypeptide: Protein Rev (116 aa).

Phosphoserine; by host CK2 is present on Ser-5. Positions 18–26 are homomultimerization; it reads LIKILYQSN. Positions 23-49 are disordered; it reads YQSNPPPSPEGTRQARRNRRRRWRARQ. The Nuclear localization signal and RNA-binding (RRE) motif lies at 34 to 50; that stretch reads TRQARRNRRRRWRARQR. Positions 36–49 are enriched in basic residues; it reads QARRNRRRRWRARQ. A Nuclear export signal and binding to XPO1 motif is present at residues 73–84; sequence LQLPPLERLNLN. The interval 86 to 116 is disordered; that stretch reads SEDCGTSGTQGVGSPQISVESPTVLESGTEE. A phosphoserine; by host mark is found at Ser-92 and Ser-99.

The protein belongs to the HIV-1 REV protein family. In terms of assembly, homomultimer; when bound to the RRE. Multimeric assembly is essential for activity and may involve XPO1. Binds to human KPNB1, XPO1, TNPO1, RANBP5 and IPO7. Interacts with the viral Integrase. Interacts with human KHDRBS1. Interacts with human NAP1; this interaction decreases Rev multimerization and stimulates its activity. Interacts with human DEAD-box helicases DDX3 and DDX24; these interactions may serve for viral RNA export to the cytoplasm and packaging, respectively. Interacts with human PSIP1; this interaction may inhibit HIV-1 DNA integration by promoting dissociation of the Integrase-LEDGF/p75 complex. Asymmetrically arginine dimethylated at one site by host PRMT6. Methylation impairs the RNA-binding activity and export of viral RNA from the nucleus to the cytoplasm. Post-translationally, phosphorylated by protein kinase CK2. Presence of, and maybe binding to the N-terminus of the regulatory beta subunit of CK2 is necessary for CK2-mediated Rev's phosphorylation.

Its subcellular location is the host nucleus. The protein localises to the host nucleolus. It localises to the host cytoplasm. Functionally, escorts unspliced or incompletely spliced viral pre-mRNAs (late transcripts) out of the nucleus of infected cells. These pre-mRNAs carry a recognition sequence called Rev responsive element (RRE) located in the env gene, that is not present in fully spliced viral mRNAs (early transcripts). This function is essential since most viral proteins are translated from unspliced or partially spliced pre-mRNAs which cannot exit the nucleus by the pathway used by fully processed cellular mRNAs. Rev itself is translated from a fully spliced mRNA that readily exits the nucleus. Rev's nuclear localization signal (NLS) binds directly to KPNB1/Importin beta-1 without previous binding to KPNA1/Importin alpha-1. KPNB1 binds to the GDP bound form of RAN (Ran-GDP) and targets Rev to the nucleus. In the nucleus, the conversion from Ran-GDP to Ran-GTP dissociates Rev from KPNB1 and allows Rev's binding to the RRE in viral pre-mRNAs. Rev multimerization on the RRE via cooperative assembly exposes its nuclear export signal (NES) to the surface. Rev can then form a complex with XPO1/CRM1 and Ran-GTP, leading to nuclear export of the complex. Conversion from Ran-GTP to Ran-GDP mediates dissociation of the Rev/RRE/XPO1/RAN complex, so that Rev can return to the nucleus for a subsequent round of export. Beside KPNB1, also seems to interact with TNPO1/Transportin-1, RANBP5/IPO5 and IPO7/RANBP7 for nuclear import. The nucleoporin-like HRB/RIP is an essential cofactor that probably indirectly interacts with Rev to release HIV RNAs from the perinuclear region to the cytoplasm. This Homo sapiens (Human) protein is Protein Rev.